Consider the following 283-residue polypeptide: ATP phosphoribosyltransferase (283 aa).

It belongs to the ATP phosphoribosyltransferase family. Long subfamily. It depends on Mg(2+) as a cofactor.

It is found in the cytoplasm. It catalyses the reaction 1-(5-phospho-beta-D-ribosyl)-ATP + diphosphate = 5-phospho-alpha-D-ribose 1-diphosphate + ATP. It functions in the pathway amino-acid biosynthesis; L-histidine biosynthesis; L-histidine from 5-phospho-alpha-D-ribose 1-diphosphate: step 1/9. Its activity is regulated as follows. Feedback inhibited by histidine. Functionally, catalyzes the condensation of ATP and 5-phosphoribose 1-diphosphate to form N'-(5'-phosphoribosyl)-ATP (PR-ATP). Has a crucial role in the pathway because the rate of histidine biosynthesis seems to be controlled primarily by regulation of HisG enzymatic activity. This chain is ATP phosphoribosyltransferase, found in Bifidobacterium longum (strain NCC 2705).